Reading from the N-terminus, the 562-residue chain is Phosphoglucomutase-1 (562 aa).

M1 carries the post-translational modification N-acetylmethionine. K16 carries the N6-acetyllysine modification. R23 lines the alpha-D-glucose 1,6-bisphosphate pocket. At T115 the chain carries Phosphothreonine. An alpha-D-glucose 1,6-bisphosphate-binding site is contributed by S117. Catalysis depends on S117, which acts as the Phosphoserine intermediate. S117 contacts Mg(2+). Phosphoserine is present on residues S117 and S134. Position 185 is a phosphothreonine (T185). 2 positions are modified to phosphoserine: S206 and S213. Mg(2+) is bound by residues D288, D290, and D292. Residues D292 and R293 each coordinate alpha-D-glucose 1,6-bisphosphate. K349 bears the N6-acetyllysine mark. At Y353 the chain carries Phosphotyrosine. Position 357 (T357) interacts with alpha-D-glucose 1,6-bisphosphate. S369 bears the Phosphoserine mark. Positions 376, 378, and 389 each coordinate alpha-D-glucose 1,6-bisphosphate. S378 is modified (phosphoserine). Residue K419 is modified to N6-succinyllysine. The residue at position 467 (T467) is a Phosphothreonine; by PAK1. 3 positions are modified to phosphoserine: S477, S485, and S505. A Phosphothreonine modification is found at T507. Residues S509 and S541 each carry the phosphoserine modification.

It belongs to the phosphohexose mutase family. Monomer. Mg(2+) is required as a cofactor. In terms of processing, phosphorylation at Thr-467 by PAK1 significantly enhances enzymatic activity.

The protein resides in the cytoplasm. It carries out the reaction alpha-D-glucose 1-phosphate = alpha-D-glucose 6-phosphate. The catalysed reaction is O-phospho-L-seryl-[protein] + alpha-D-glucose 1-phosphate = alpha-D-glucose 1,6-bisphosphate + L-seryl-[protein]. The enzyme catalyses alpha-D-glucose 1,6-bisphosphate + L-seryl-[protein] = O-phospho-L-seryl-[protein] + alpha-D-glucose 6-phosphate. In terms of biological role, catalyzes the reversible isomerization of alpha-D-glucose 1-phosphate to alpha-D-glucose 6-phosphate. The mechanism proceeds via the intermediate compound alpha-D-glucose 1,6-bisphosphate. This enzyme participates in both the breakdown and synthesis of glucose. This chain is Phosphoglucomutase-1 (PGM1), found in Macaca fascicularis (Crab-eating macaque).